Reading from the N-terminus, the 452-residue chain is THO complex subunit 5A (452 aa).

It belongs to the THOC5 family. Component of the THO complex, which is composed of THO1, THO2, THO3, THO5, THO6 and THO7.

It is found in the nucleus. Functionally, acts as a component of the THO subcomplex of the TREX complex which is thought to couple mRNA transcription, processing and nuclear export. This chain is THO complex subunit 5A (THO5A), found in Arabidopsis thaliana (Mouse-ear cress).